Reading from the N-terminus, the 392-residue chain is Protein O-glucosyltransferase 1 (392 aa).

A signal peptide spans 1–23 (MELGVSSQLWLWLLLLLLPPVPG). 4 disulfides stabilise this stretch: cysteine 49–cysteine 56, cysteine 54–cysteine 357, cysteine 102–cysteine 108, and cysteine 263–cysteine 286. N-linked (GlcNAc...) asparagine glycosylation is present at asparagine 53. Residues 103-107 (MFPSR) form an interaction with the consensus sequence C-X-S-X-[PA]-C in peptide substrates region. The active-site Proton donor/acceptor is aspartate 133. The tract at residues 172-178 (AVWPIYP) is interaction with the consensus sequence C-X-S-X-[PA]-C in peptide substrates. A UDP-alpha-D-glucose-binding site is contributed by tyrosine 177. N-linked (GlcNAc...) asparagine glycosylation is present at asparagine 204. Residues serine 212, arginine 218, and 274-279 (VAASFR) each bind UDP-alpha-D-glucose. An N-linked (GlcNAc...) asparagine glycan is attached at asparagine 373. Residues 389 to 392 (KIEL) carry the Prevents secretion from ER motif.

This sequence belongs to the glycosyltransferase 90 family.

Its subcellular location is the endoplasmic reticulum lumen. It carries out the reaction L-seryl-[EGF-like domain protein] + UDP-alpha-D-xylose = 3-O-(beta-D-xylosyl)-L-seryl-[EGF-like domain protein] + UDP + H(+). The catalysed reaction is L-seryl-[EGF-like domain protein] + UDP-alpha-D-glucose = 3-O-(beta-D-glucosyl)-L-seryl-[EGF-like domain protein] + UDP + H(+). The protein operates within protein modification; protein glycosylation. In terms of biological role, dual specificity glycosyltransferase that catalyzes the transfer of glucose and xylose from UDP-glucose and UDP-xylose, respectively, to a serine residue found in the consensus sequence of C-X-S-X-P-C. Specifically targets extracellular EGF repeats of protein such as CRB2, F7, F9 and NOTCH2. Acts as a positive regulator of Notch signaling by mediating O-glucosylation of Notch, leading to regulate muscle development. Notch glucosylation does not affect Notch ligand binding. Required during early development to promote gastrulation: acts by mediating O-glucosylation of CRB2, which is required for CRB2 localization to the cell membrane. This chain is Protein O-glucosyltransferase 1 (POGLUT1), found in Bos taurus (Bovine).